Here is a 554-residue protein sequence, read N- to C-terminus: 5'-AMP-activated protein kinase catalytic subunit alpha-1 (554 aa).

Residues 22-274 (YILGDTLGVG…IKDIREHEWF (253 aa)) enclose the Protein kinase domain. The residue at position 27 (Thr-27) is a Phosphothreonine. ATP contacts are provided by residues 28-36 (LGVGTFGKV) and Lys-51. Asp-145 functions as the Proton acceptor in the catalytic mechanism. Thr-178 is subject to Phosphothreonine; by LKB1 and CaMKK2. Phosphothreonine occurs at positions 264 and 350. An AIS region spans residues 297-376 (EALKEVCEKF…PERVPFLVAE (80 aa)). The residue at position 351 (Ser-351) is a Phosphoserine. Phosphoserine; by ULK1 is present on Ser-355. A Phosphothreonine; by ULK1 modification is found at Thr-363. At Thr-377 the chain carries Phosphothreonine. Ser-392 bears the Phosphoserine; by ULK1 mark. Position 462 is a phosphoserine (Ser-462). Over residues 480 to 500 (KSGTATPQRSGSVSNYRSCQR) the composition is skewed to polar residues. The interval 480–531 (KSGTATPQRSGSVSNYRSCQRSDSDAEAQGKSSEVSLTSSVTSLDSSPVDLT) is disordered. Ser-481 bears the Phosphoserine; by ULK1 mark. Thr-483 is modified (phosphothreonine; by ULK1). Thr-485 carries the post-translational modification Phosphothreonine. Phosphoserine is present on residues Ser-491, Ser-503, Ser-519, and Ser-522. Residues 511-530 (SSEVSLTSSVTSLDSSPVDL) are compositionally biased toward low complexity.

This sequence belongs to the protein kinase superfamily. CAMK Ser/Thr protein kinase family. SNF1 subfamily. In terms of assembly, AMPK is a heterotrimer of an alpha catalytic subunit (PRKAA1 or PRKAA2), a beta (PRKAB1 or PRKAB2) and a gamma non-catalytic subunits (PRKAG1, PRKAG2 or PRKAG3). Interacts with FNIP1 and FNIP2. Requires Mg(2+) as cofactor. Ubiquitinated. In terms of processing, phosphorylated at Thr-183 by STK11/LKB1 in complex with STE20-related adapter-alpha (STRADA) pseudo kinase and CAB39. Also phosphorylated at Thr-183 by CAMKK2; triggered by a rise in intracellular calcium ions, without detectable changes in the AMP/ATP ratio. CAMKK1 can also phosphorylate Thr-183, but at a much lower level. Dephosphorylated by protein phosphatase 2A and 2C (PP2A and PP2C). Phosphorylated by ULK1 and ULK2; leading to negatively regulate AMPK activity and suggesting the existence of a regulatory feedback loop between ULK1, ULK2 and AMPK. Dephosphorylated by PPM1A and PPM1B. Post-translationally, glycosylated; O-GlcNAcylated by OGT, promoting the AMP-activated protein kinase (AMPK) activity.

It is found in the cytoplasm. The protein localises to the nucleus. It catalyses the reaction L-seryl-[protein] + ATP = O-phospho-L-seryl-[protein] + ADP + H(+). The enzyme catalyses L-threonyl-[protein] + ATP = O-phospho-L-threonyl-[protein] + ADP + H(+). It carries out the reaction L-seryl-[acetyl-CoA carboxylase] + ATP = O-phospho-L-seryl-[acetyl-CoA carboxylase] + ADP + H(+). The catalysed reaction is L-seryl-[3-hydroxy-3-methylglutaryl-coenzyme A reductase] + ATP = O-phospho-L-seryl-[3-hydroxy-3-methylglutaryl-coenzyme A reductase] + ADP + H(+). It catalyses the reaction L-seryl-[tau protein] + ATP = O-phospho-L-seryl-[tau protein] + ADP + H(+). The enzyme catalyses L-threonyl-[tau protein] + ATP = O-phospho-L-threonyl-[tau protein] + ADP + H(+). Its activity is regulated as follows. Activated by phosphorylation on Thr-183. Binding of AMP to non-catalytic gamma subunit (PRKAG1, PRKAG2 or PRKAG3) results in allosteric activation, inducing phosphorylation on Thr-183. AMP-binding to gamma subunit also sustains activity by preventing dephosphorylation of Thr-183. ADP also stimulates Thr-183 phosphorylation, without stimulating already phosphorylated AMPK. ATP promotes dephosphorylation of Thr-183, rendering the enzyme inactive. Under physiological conditions AMPK mainly exists in its inactive form in complex with ATP, which is much more abundant than AMP. Selectively inhibited by compound C (6-[4-(2-Piperidin-1-yl-ethoxy)-phenyl)]-3-pyridin-4-yl-pyyrazolo[1,5-a] pyrimidine. Activated by resveratrol, a natural polyphenol present in red wine, and S17834, a synthetic polyphenol. In terms of biological role, catalytic subunit of AMP-activated protein kinase (AMPK), an energy sensor protein kinase that plays a key role in regulating cellular energy metabolism. In response to reduction of intracellular ATP levels, AMPK activates energy-producing pathways and inhibits energy-consuming processes: inhibits protein, carbohydrate and lipid biosynthesis, as well as cell growth and proliferation. AMPK acts via direct phosphorylation of metabolic enzymes, and by longer-term effects via phosphorylation of transcription regulators. Regulates lipid synthesis by phosphorylating and inactivating lipid metabolic enzymes such as ACACA, ACACB, GYS1, HMGCR and LIPE; regulates fatty acid and cholesterol synthesis by phosphorylating acetyl-CoA carboxylase (ACACA and ACACB) and hormone-sensitive lipase (LIPE) enzymes, respectively. Promotes lipolysis of lipid droplets by mediating phosphorylation of isoform 1 of CHKA (CHKalpha2). Regulates insulin-signaling and glycolysis by phosphorylating IRS1, PFKFB2 and PFKFB3. AMPK stimulates glucose uptake in muscle by increasing the translocation of the glucose transporter SLC2A4/GLUT4 to the plasma membrane, possibly by mediating phosphorylation of TBC1D4/AS160. Regulates transcription and chromatin structure by phosphorylating transcription regulators involved in energy metabolism such as CRTC2/TORC2, FOXO3, histone H2B, HDAC5, MEF2C, MLXIPL/ChREBP, EP300, HNF4A, p53/TP53, SREBF1, SREBF2 and PPARGC1A. Acts as a key regulator of glucose homeostasis in liver by phosphorylating CRTC2/TORC2, leading to CRTC2/TORC2 sequestration in the cytoplasm. In response to stress, phosphorylates 'Ser-36' of histone H2B (H2BS36ph), leading to promote transcription. Acts as a key regulator of cell growth and proliferation by phosphorylating FNIP1, TSC2, RPTOR, WDR24 and ATG1/ULK1: in response to nutrient limitation, negatively regulates the mTORC1 complex by phosphorylating RPTOR component of the mTORC1 complex and by phosphorylating and activating TSC2. Also phosphorylates and inhibits GATOR2 subunit WDR24 in response to nutrient limitation, leading to suppress glucose-mediated mTORC1 activation. In response to energetic stress, phosphorylates FNIP1, inactivating the non-canonical mTORC1 signaling, thereby promoting nuclear translocation of TFEB and TFE3, and inducing transcription of lysosomal or autophagy genes. In response to nutrient limitation, promotes autophagy by phosphorylating and activating ATG1/ULK1. In that process also activates WDR45/WIPI4. Phosphorylates CASP6, thereby preventing its autoprocessing and subsequent activation. In response to nutrient limitation, phosphorylates transcription factor FOXO3 promoting FOXO3 mitochondrial import. Also acts as a regulator of cellular polarity by remodeling the actin cytoskeleton; probably by indirectly activating myosin. AMPK also acts as a regulator of circadian rhythm by mediating phosphorylation of CRY1, leading to destabilize it. May regulate the Wnt signaling pathway by phosphorylating CTNNB1, leading to stabilize it. Also has tau-protein kinase activity: in response to amyloid beta A4 protein (APP) exposure, activated by CAMKK2, leading to phosphorylation of MAPT/TAU; however the relevance of such data remains unclear in vivo. Also phosphorylates CFTR, EEF2K, KLC1, NOS3 and SLC12A1. Regulates hepatic lipogenesis. Activated via SIRT3, represses sterol regulatory element-binding protein (SREBP) transcriptional activities and ATP-consuming lipogenesis to restore cellular energy balance. Upon stress, regulates mitochondrial fragmentation through phosphorylation of MTFR1L. This chain is 5'-AMP-activated protein kinase catalytic subunit alpha-1 (PRKAA1), found in Pongo abelii (Sumatran orangutan).